A 388-amino-acid chain; its full sequence is MAMRVETNPLEAAYAALLENGLDGAGEALRILVNEAAKIERSAFLGARPYERTETRRDYANGFKPKTVLTRHGELTFQVPQVRSSDFYPSALEKGTRTDQAVNLALAEMYVQGVSTRRVIDVLQRLLGPEISLSSAQVSRAAAKLDEGLRAWRERPLGETPYLFLDARYEKVRLEGRIVDCAVLIAVGIEASGKRRVLGCEVATSEAEINWRRFLESLLARGLKGVTLIIADDHAGLKAARRAVLPSVPWQRCQFHLQQNAGALTTRQEARKTVAAQMRAIFNAPDRTEAERLLKAALTLWCKEHPKLAEWAETAIPESLTVFDFPAAHRIRLRTTNGLERINRELRRRTRVASIFPNPDSCLRLVSALLAELDDEWMTGKVYLNFNP.

Belongs to the transposase mutator family.

Required for the transposition of the insertion element. The chain is Transposase for insertion sequence element IS406 from Burkholderia multivorans (strain ATCC 17616 / 249).